The sequence spans 344 residues: D-beta-hydroxybutyrate dehydrogenase, mitochondrial (344 aa).

A mitochondrion-targeting transit peptide spans 1–46; sequence MLTARLSRPLSQLPRKTLNFSDRENGTRGSLLLYSAPFVPVGRRTY. An NAD(+)-binding site is contributed by 59-83; that stretch reads LITGCDSGFGFSLAKHLHSEGFLVF. An N6-acetyllysine mark is found at Lys73 and Lys97. The residue at position 103 (Lys103) is an N6-acetyllysine; alternate. Position 103 is an N6-succinyllysine; alternate (Lys103). Lys177 carries the N6-acetyllysine modification. Substrate is bound at residue Ser195. Tyr208 serves as the catalytic Proton acceptor. The residue at position 212 (Lys212) is an N6-acetyllysine. Residue Ser219 is glycosylated (O-linked (GlcNAc) serine). Ser246 carries the post-translational modification Phosphoserine. Lys260 carries the N6-acetyllysine; alternate modification. An N6-succinyllysine; alternate modification is found at Lys260. Position 281 is an N6-acetyllysine (Lys281).

Belongs to the short-chain dehydrogenases/reductases (SDR) family. In terms of assembly, homotetramer.

The protein resides in the mitochondrion inner membrane. It is found in the mitochondrion matrix. The enzyme catalyses (R)-3-hydroxybutanoate + NAD(+) = acetoacetate + NADH + H(+). Requires phosphatidylcholine as an allosteric activator for enzymatic activity. This chain is D-beta-hydroxybutyrate dehydrogenase, mitochondrial, found in Bos taurus (Bovine).